A 222-amino-acid polypeptide reads, in one-letter code: Kinetochore protein Spc25 (222 aa).

A coiled-coil region spans residues 51 to 100 (RHQRKVGKLQKVIMERREELDKRVSFIEELDRELEATKLRSLAMKDRIKQ).

The protein belongs to the SPC25 family. As to quaternary structure, component of the Ndc80 complex, which is composed of Ndc80, Nuf2 and Spc25.

Its subcellular location is the nucleus. It localises to the chromosome. The protein localises to the centromere. The protein resides in the kinetochore. Acts as a component of the essential kinetochore-associated Ndc80 complex, which is required for chromosome segregation and spindle checkpoint activity during meiosis and mitosis. Required for kinetochore integrity and the organization of stable microtubule binding sites in the outer plate of the kinetochore. Participates in SAC signaling that responds specifically to disruptions in spindle microtubule dynamics. The NDC80 complex synergistically enhances the affinity of the SKA1 complex for microtubules and may allow the NDC80 complex to track depolymerizing microtubules. This chain is Kinetochore protein Spc25, found in Drosophila sechellia (Fruit fly).